We begin with the raw amino-acid sequence, 251 residues long: Small ribosomal subunit protein uS2 (251 aa).

The protein belongs to the universal ribosomal protein uS2 family.

The polypeptide is Small ribosomal subunit protein uS2 (rpsB) (Arthrospira platensis (Spirulina platensis)).